Here is a 216-residue protein sequence, read N- to C-terminus: MAALAALRLLHPILAVRSGVGAALQVRGVHSSMAADSPSSTQPAVSQARAVVPKPAALPSSRGEYVVAKLDDLINWARRSSLWPMTFGLACCAVEMMHMAAPRYDMDRFGVVFRASPRQSDVMIVAGTLTNKMAPALRKVYDQMPEPRYVVSMGSCANGGGYYHYSYSVVRGCDRIVPVDIYVPGCPPTAEALLYGILQLQKKIKREKRLRIWYRR.

Residues 1-37 constitute a mitochondrion transit peptide; it reads MAALAALRLLHPILAVRSGVGAALQVRGVHSSMAADS. Residues C91 and C92 each contribute to the [4Fe-4S] cluster site. R114 carries the post-translational modification Hydroxyarginine. Positions 156 and 186 each coordinate [4Fe-4S] cluster.

This sequence belongs to the complex I 20 kDa subunit family. As to quaternary structure, core subunit of respiratory chain NADH dehydrogenase (Complex I) which is composed of 45 different subunits. This is a component of the iron-sulfur (IP) fragment of the enzyme. [4Fe-4S] cluster is required as a cofactor. Post-translationally, hydroxylated ar Arg-114 by NDUFAF5 early in the pathway of assembly of complex I, before the formation of the juncture between peripheral and membrane arms.

It is found in the mitochondrion inner membrane. It carries out the reaction a ubiquinone + NADH + 5 H(+)(in) = a ubiquinol + NAD(+) + 4 H(+)(out). Core subunit of the mitochondrial membrane respiratory chain NADH dehydrogenase (Complex I) which catalyzes electron transfer from NADH through the respiratory chain, using ubiquinone as an electron acceptor. Essential for the catalytic activity of complex I. This chain is NADH dehydrogenase [ubiquinone] iron-sulfur protein 7, mitochondrial (NDUFS7), found in Bos taurus (Bovine).